A 321-amino-acid polypeptide reads, in one-letter code: Holliday junction branch migration complex subunit RuvB (321 aa).

The segment at 1–173 (MMMEQECVDD…FGIISRLEFY (173 aa)) is large ATPase domain (RuvB-L). ATP is bound by residues Ile-12, Arg-13, Gly-54, Lys-57, Thr-58, Thr-59, 120–122 (EDF), Arg-163, Tyr-173, and Arg-210. Thr-58 lines the Mg(2+) pocket. Positions 174–244 (TPAELACIVK…LASDALARMD (71 aa)) are small ATPAse domain (RuvB-S). The interval 247 to 321 (ELGLDQMDRK…KAYRHMNLLA (75 aa)) is head domain (RuvB-H). DNA-binding residues include Arg-302 and Arg-307.

Belongs to the RuvB family. In terms of assembly, homohexamer. Forms an RuvA(8)-RuvB(12)-Holliday junction (HJ) complex. HJ DNA is sandwiched between 2 RuvA tetramers; dsDNA enters through RuvA and exits via RuvB. An RuvB hexamer assembles on each DNA strand where it exits the tetramer. Each RuvB hexamer is contacted by two RuvA subunits (via domain III) on 2 adjacent RuvB subunits; this complex drives branch migration. In the full resolvosome a probable DNA-RuvA(4)-RuvB(12)-RuvC(2) complex forms which resolves the HJ.

The protein resides in the cytoplasm. It catalyses the reaction ATP + H2O = ADP + phosphate + H(+). The RuvA-RuvB-RuvC complex processes Holliday junction (HJ) DNA during genetic recombination and DNA repair, while the RuvA-RuvB complex plays an important role in the rescue of blocked DNA replication forks via replication fork reversal (RFR). RuvA specifically binds to HJ cruciform DNA, conferring on it an open structure. The RuvB hexamer acts as an ATP-dependent pump, pulling dsDNA into and through the RuvAB complex. RuvB forms 2 homohexamers on either side of HJ DNA bound by 1 or 2 RuvA tetramers; 4 subunits per hexamer contact DNA at a time. Coordinated motions by a converter formed by DNA-disengaged RuvB subunits stimulates ATP hydrolysis and nucleotide exchange. Immobilization of the converter enables RuvB to convert the ATP-contained energy into a lever motion, pulling 2 nucleotides of DNA out of the RuvA tetramer per ATP hydrolyzed, thus driving DNA branch migration. The RuvB motors rotate together with the DNA substrate, which together with the progressing nucleotide cycle form the mechanistic basis for DNA recombination by continuous HJ branch migration. Branch migration allows RuvC to scan DNA until it finds its consensus sequence, where it cleaves and resolves cruciform DNA. The polypeptide is Holliday junction branch migration complex subunit RuvB (Oleidesulfovibrio alaskensis (strain ATCC BAA-1058 / DSM 17464 / G20) (Desulfovibrio alaskensis)).